The following is a 295-amino-acid chain: Iron-sulfur cluster carrier protein (295 aa).

38–45 (GKGGVGKS) is a binding site for ATP.

The protein belongs to the Mrp/NBP35 ATP-binding proteins family. Homodimer.

Its function is as follows. Binds and transfers iron-sulfur (Fe-S) clusters to target apoproteins. Can hydrolyze ATP. The sequence is that of Iron-sulfur cluster carrier protein from Pyrococcus abyssi (strain GE5 / Orsay).